A 141-amino-acid polypeptide reads, in one-letter code: ATP synthase epsilon chain 1 (141 aa).

The protein belongs to the ATPase epsilon chain family. F-type ATPases have 2 components, CF(1) - the catalytic core - and CF(0) - the membrane proton channel. CF(1) has five subunits: alpha(3), beta(3), gamma(1), delta(1), epsilon(1). CF(0) has three main subunits: a, b and c.

It localises to the cell inner membrane. In terms of biological role, produces ATP from ADP in the presence of a proton gradient across the membrane. This is ATP synthase epsilon chain 1 from Paraburkholderia xenovorans (strain LB400).